The following is a 169-amino-acid chain: Transcription antitermination protein NusB (169 aa).

This sequence belongs to the NusB family.

Involved in transcription antitermination. Required for transcription of ribosomal RNA (rRNA) genes. Binds specifically to the boxA antiterminator sequence of the ribosomal RNA (rrn) operons. The polypeptide is Transcription antitermination protein NusB (Deinococcus geothermalis (strain DSM 11300 / CIP 105573 / AG-3a)).